The following is a 695-amino-acid chain: Follicle-stimulating hormone receptor (695 aa).

The signal sequence occupies residues 1–17 (MTFLLVSLLAFLSLGSG). Intrachain disulfides connect cysteine 18-cysteine 25 and cysteine 23-cysteine 32. An LRRNT domain is found at 18 to 46 (CHHRICHCWHRVFLCQESKVTEIPSDLPR). Over 18-366 (CHHRICHCWH…EDIMGYDILR (349 aa)) the chain is Extracellular. LRR repeat units follow at residues 49–72 (VELR…FGDL), 73–97 (EKIE…LSKL), 98–118 (HEIR…AFQN), 119–143 (LPNL…KIQS), 144–169 (LQKV…MGLS), 170–192 (FESM…AFNG), 193–216 (TQLD…VFQG), 217–240 (ASGP…GLEN), and 241–259 (IKKL…PSLD). A glycan (N-linked (GlcNAc...) asparagine) is linked at asparagine 93. 2 N-linked (GlcNAc...) asparagine glycosylation sites follow: asparagine 191 and asparagine 199. Cystine bridges form between cysteine 275–cysteine 346, cysteine 276–cysteine 292, cysteine 276–cysteine 356, and cysteine 292–cysteine 338. Asparagine 293 carries N-linked (GlcNAc...) asparagine glycosylation. The residue at position 335 (tyrosine 335) is a Sulfotyrosine. The chain crosses the membrane as a helical span at residues 367–387 (VLIWFISILAITGNIIVLMIL). Residues 388–398 (ITSQYKLTVPR) are Cytoplasmic-facing. A helical transmembrane segment spans residues 399–419 (FLMCNLAFADLCIGIYLLLIA). The Extracellular portion of the chain corresponds to 420 to 444 (SVDIYTKSQYHNYAIDWQTGAGCDA). A helical transmembrane segment spans residues 445–465 (AGFFTVFASELSVYTLTVITL). The Cytoplasmic portion of the chain corresponds to 466-487 (ERWHTITHAMQLECKVQLRHAA). Residues 488–508 (IIMLLGWIFAFMVALFPIFGI) traverse the membrane as a helical segment. Over 509–528 (SSYMKVSICLPMDIDSPLSQ) the chain is Extracellular. The helical transmembrane segment at 529 to 550 (LYVMSLLVLNVLAFVVICCCYA) threads the bilayer. The Cytoplasmic portion of the chain corresponds to 551–573 (HIYLTVRNPNIVSSSSDTKIAKR). A helical transmembrane segment spans residues 574 to 594 (MAMLIFTDFLCMAPISFFAIS). Residues 595–608 (ASLKVPLITVSKSK) are Extracellular-facing. The chain crosses the membrane as a helical span at residues 609-629 (ILLVLFYPINSCANPFLYAIF). The Cytoplasmic portion of the chain corresponds to 630–695 (TKNFRRDFFI…LIPLRHLAKN (66 aa)).

Belongs to the G-protein coupled receptor 1 family. FSH/LSH/TSH subfamily. As to quaternary structure, homotrimer. Functions as a homotrimer binding the FSH hormone heterodimer composed of CGA and FSHB. Interacts with ARRB2. Interacts with APPL2; interaction is independent of follicle stimulating hormone stimulation. N-glycosylated; indirectly required for FSH-binding, possibly via a conformational change that allows high affinity binding of hormone. In terms of processing, sulfated.

The protein localises to the cell membrane. Functionally, g protein-coupled receptor for follitropin, the follicle-stimulating hormone. Through cAMP production activates the downstream PI3K-AKT and ERK1/ERK2 signaling pathways. The polypeptide is Follicle-stimulating hormone receptor (FSHR) (Felis catus (Cat)).